Here is a 55-residue protein sequence, read N- to C-terminus: Large ribosomal subunit protein bL33 (55 aa).

The protein belongs to the bacterial ribosomal protein bL33 family.

The polypeptide is Large ribosomal subunit protein bL33 (Rhodopseudomonas palustris (strain HaA2)).